The primary structure comprises 76 residues: Large ribosomal subunit protein uL29 (76 aa).

The protein belongs to the universal ribosomal protein uL29 family.

The chain is Large ribosomal subunit protein uL29 from Gloeothece citriformis (strain PCC 7424) (Cyanothece sp. (strain PCC 7424)).